The following is a 41-amino-acid chain: Large ribosomal subunit protein bL36 (41 aa).

The protein belongs to the bacterial ribosomal protein bL36 family.

This chain is Large ribosomal subunit protein bL36, found in Gluconobacter oxydans (strain 621H) (Gluconobacter suboxydans).